We begin with the raw amino-acid sequence, 311 residues long: Probable 5-dehydro-4-deoxyglucarate dehydratase (311 aa).

The protein belongs to the DapA family.

The catalysed reaction is 5-dehydro-4-deoxy-D-glucarate + H(+) = 2,5-dioxopentanoate + CO2 + H2O. It participates in carbohydrate acid metabolism; D-glucarate degradation; 2,5-dioxopentanoate from D-glucarate: step 2/2. This chain is Probable 5-dehydro-4-deoxyglucarate dehydratase, found in Ralstonia nicotianae (strain ATCC BAA-1114 / GMI1000) (Ralstonia solanacearum).